The sequence spans 452 residues: Protoheme IX farnesyltransferase, mitochondrial (452 aa).

The transit peptide at 1-27 directs the protein to the mitochondrion; sequence MSLVIQPLLMRALNPNLSSILISGRGF. 7 helical membrane-spanning segments follow: residues 152–172, 235–255, 267–287, 291–311, 341–361, 364–386, and 417–437; these read VLVMLSAICSYALSPYPATVL, ILWLGVNPTVAFLGFSNIALY, IINTWVGALVGAIPPLMGWAA, LSHPGAWCLAGLLYAWQFPHF, VALRYSLLMFPLCFGLSYFNV, WYYQLDSAFVNAWMSLWAFKFYF, and TFWVSVLHLPAVLILAILHKK.

Belongs to the UbiA prenyltransferase family.

Its subcellular location is the mitochondrion membrane. Converts protoheme IX and farnesyl diphosphate to heme O. The sequence is that of Protoheme IX farnesyltransferase, mitochondrial (COX10) from Kluyveromyces lactis (strain ATCC 8585 / CBS 2359 / DSM 70799 / NBRC 1267 / NRRL Y-1140 / WM37) (Yeast).